The following is a 573-amino-acid chain: MRTAEAFDNIYLDLSKQPGKCKLAESGLGWRPSGGGETFTLDSNNIGAAQWSRAAKGYELKILSRSSGVIQLDGFDQEDFERLSKAFKIWYGINVENREHALRGWNWGKAEFTKAELAFNVQNRPAFEIPYSEISNTNLAGKNEVAVEFALTSDGDANAQPSGSTKNRGRKAAAGPDELVEMRFYIPGTAVKTEKGIKTENDENGEEEEEGEEQNAANLFYETLMEKAEIGDVAGDTFATFLDVLHLTPRGRFDIDMYESSFRLRGKTYDYKIQYASIKKFFLLPKNDEMHTLIVLGLDPPLRQGQTRYPFLVMQLKLDEEISLELNMTEELLESRYKDKLEPRYEEPIHQVVTKIFRGLSGKKVIMPSKDFVSHHGHSGVKCSIKANEGLLYFLDKSLIFVPKPATYVQIENIAVITMSRVGGAVSASRTFDITVTLKAGMGEHQFSNINREEQQPLEEFFKAKNIRFKNEMSDDTSALIAAALDNDDMMSSDEDGGRADRGSADEDEESVDEDFQAESESDVAEEFDSEHESSGSASDAEMDDASDAGDDEEDVDMSEEEERPKKKSKIGK.

Disordered stretches follow at residues 153–174 and 485–573; these read SDGDANAQPSGSTKNRGRKAAA and LDND…KIGK. Positions 486-495 are enriched in acidic residues; the sequence is DNDDMMSSDE. Positions 496 to 505 are enriched in basic and acidic residues; sequence DGGRADRGSA. Composition is skewed to acidic residues over residues 506 to 530 and 541 to 562; these read DEDEESVDEDFQAESESDVAEEFDS and AEMDDASDAGDDEEDVDMSEEE.

It belongs to the SSRP1 family. In terms of assembly, forms a stable heterodimer with spt16. The spt16-pob3 dimer weakly associates with multiple molecules of nhp6 to form the FACT complex.

It localises to the nucleus. The protein localises to the chromosome. Its function is as follows. Component of the FACT complex, a general chromatin factor that acts to reorganize nucleosomes. The FACT complex is involved in multiple processes that require DNA as a template such as mRNA elongation, DNA replication and DNA repair. During transcription elongation the FACT complex acts as a histone chaperone that both destabilizes and restores nucleosomal structure. It facilitates the passage of RNA polymerase II and transcription by promoting the dissociation of one histone H2A-H2B dimer from the nucleosome, then subsequently promotes the reestablishment of the nucleosome following the passage of RNA polymerase II. This Aspergillus fumigatus (strain ATCC MYA-4609 / CBS 101355 / FGSC A1100 / Af293) (Neosartorya fumigata) protein is FACT complex subunit pob3 (pob3).